The chain runs to 340 residues: 4-amino-5-hydroxymethyl-2-methylpyrimidine phosphate synthase THI12 (340 aa).

Residue Lys-62 is modified to N6-(pyridoxal phosphate)lysine. The active site involves His-66. Gly-115–Gly-118 contributes to the pyridoxal 5'-phosphate binding site. The CCCFC; essential for catalytic activity, may be the site of iron coordination motif lies at Cys-195–Cys-199.

It belongs to the NMT1/THI5 family. As to quaternary structure, homodimer. Fe cation is required as a cofactor.

It carries out the reaction N(6)-(pyridoxal phosphate)-L-lysyl-[4-amino-5-hydroxymethyl-2-methylpyrimidine phosphate synthase] + L-histidyl-[4-amino-5-hydroxymethyl-2-methylpyrimidine phosphate synthase] + 2 Fe(3+) + 4 H2O = L-lysyl-[4-amino-5-hydroxymethyl-2-methylpyrimidine phosphate synthase] + (2S)-2-amino-5-hydroxy-4-oxopentanoyl-[4-amino-5-hydroxymethyl-2-methylpyrimidine phosphate synthase] + 4-amino-2-methyl-5-(phosphooxymethyl)pyrimidine + 3-oxopropanoate + 2 Fe(2+) + 2 H(+). Its pathway is cofactor biosynthesis; thiamine diphosphate biosynthesis. Responsible for the formation of the pyrimidine heterocycle in the thiamine biosynthesis pathway. Catalyzes the formation of hydroxymethylpyrimidine phosphate (HMP-P) from histidine and pyridoxal phosphate (PLP). The protein uses PLP and the active site histidine to form HMP-P, generating an inactive enzyme. The enzyme can only undergo a single turnover, which suggests it is a suicide enzyme. The chain is 4-amino-5-hydroxymethyl-2-methylpyrimidine phosphate synthase THI12 from Saccharomyces cerevisiae (strain ATCC 204508 / S288c) (Baker's yeast).